Consider the following 97-residue polypeptide: Co-chaperonin GroES (97 aa).

Belongs to the GroES chaperonin family. Heptamer of 7 subunits arranged in a ring. Interacts with the chaperonin GroEL.

It localises to the cytoplasm. Its function is as follows. Together with the chaperonin GroEL, plays an essential role in assisting protein folding. The GroEL-GroES system forms a nano-cage that allows encapsulation of the non-native substrate proteins and provides a physical environment optimized to promote and accelerate protein folding. GroES binds to the apical surface of the GroEL ring, thereby capping the opening of the GroEL channel. In Stenotrophomonas maltophilia (Pseudomonas maltophilia), this protein is Co-chaperonin GroES.